The chain runs to 234 residues: Enolase-phosphatase E1 (234 aa).

2 residues coordinate Mg(2+): Asp-13 and Glu-15. Substrate is bound by residues 127–128 (SS) and Lys-164. Asp-191 is a Mg(2+) binding site.

Belongs to the HAD-like hydrolase superfamily. MasA/MtnC family. In terms of assembly, monomer. The cofactor is Mg(2+).

It localises to the cytoplasm. The protein resides in the nucleus. It carries out the reaction 5-methylsulfanyl-2,3-dioxopentyl phosphate + H2O = 1,2-dihydroxy-5-(methylsulfanyl)pent-1-en-3-one + phosphate. The protein operates within amino-acid biosynthesis; L-methionine biosynthesis via salvage pathway; L-methionine from S-methyl-5-thio-alpha-D-ribose 1-phosphate: step 3/6. It participates in amino-acid biosynthesis; L-methionine biosynthesis via salvage pathway; L-methionine from S-methyl-5-thio-alpha-D-ribose 1-phosphate: step 4/6. Functionally, bifunctional enzyme that catalyzes the enolization of 2,3-diketo-5-methylthiopentyl-1-phosphate (DK-MTP-1-P) into the intermediate 2-hydroxy-3-keto-5-methylthiopentenyl-1-phosphate (HK-MTPenyl-1-P), which is then dephosphorylated to form the acireductone 1,2-dihydroxy-3-keto-5-methylthiopentene (DHK-MTPene). The chain is Enolase-phosphatase E1 from Podospora anserina (strain S / ATCC MYA-4624 / DSM 980 / FGSC 10383) (Pleurage anserina).